A 189-amino-acid polypeptide reads, in one-letter code: uncharacterized protein (189 aa).

The N-terminal stretch at 1 to 23 (MVPPKPALWALLLALLGTAPSRA) is a signal peptide. N-linked (GlcNAc...) asparagine glycosylation occurs at asparagine 72.

This is an uncharacterized protein from Homo sapiens (Human).